Here is a 223-residue protein sequence, read N- to C-terminus: Chalcone--flavanone isomerase 2 (223 aa).

Substrate-binding residues include Thr41, Asn106, and Ser183.

The protein belongs to the chalcone isomerase family.

The catalysed reaction is a chalcone = a flavanone.. It functions in the pathway secondary metabolite biosynthesis; flavonoid biosynthesis. Catalyzes the intramolecular cyclization of bicyclic chalcones into tricyclic (S)-flavanones. Responsible for the isomerization of 4,2',4',6'-tetrahydroxychalcone (also termed chalcone) into naringenin. In Arabidopsis thaliana (Mouse-ear cress), this protein is Chalcone--flavanone isomerase 2 (CHI2).